The primary structure comprises 467 residues: Chromosomal replication initiator protein DnaA (467 aa).

A domain I, interacts with DnaA modulators region spans residues 1–79; the sequence is MTELDQFWPA…GELPVELRLG (79 aa). Residues 79-129 are domain II; that stretch reads GAPTARPAAPVAGNSQPKAKEPAKAAASAPAAPSPAKQAAVKAIGGSHEST. The segment at 84–126 is disordered; that stretch reads RPAAPVAGNSQPKAKEPAKAAASAPAAPSPAKQAAVKAIGGSH. Over residues 102–121 the composition is skewed to low complexity; sequence KAAASAPAAPSPAKQAAVKA. Residues 130–347 are domain III, AAA+ region; the sequence is RLNPSFTFDT…GALKRVVAYA (218 aa). Residues Gly-175, Gly-177, Lys-178, and Thr-179 each contribute to the ATP site. The interval 348–467 is domain IV, binds dsDNA; it reads RFTSQNITLE…YEALLSMLRN (120 aa).

Belongs to the DnaA family. In terms of assembly, oligomerizes as a right-handed, spiral filament on DNA at oriC.

The protein localises to the cytoplasm. Its function is as follows. Plays an essential role in the initiation and regulation of chromosomal replication. ATP-DnaA binds to the origin of replication (oriC) to initiate formation of the DNA replication initiation complex once per cell cycle. Binds the DnaA box (a 9 base pair repeat at the origin) and separates the double-stranded (ds)DNA. Forms a right-handed helical filament on oriC DNA; dsDNA binds to the exterior of the filament while single-stranded (ss)DNA is stabiized in the filament's interior. The ATP-DnaA-oriC complex binds and stabilizes one strand of the AT-rich DNA unwinding element (DUE), permitting loading of DNA polymerase. After initiation quickly degrades to an ADP-DnaA complex that is not apt for DNA replication. Binds acidic phospholipids. The protein is Chromosomal replication initiator protein DnaA of Chromobacterium violaceum (strain ATCC 12472 / DSM 30191 / JCM 1249 / CCUG 213 / NBRC 12614 / NCIMB 9131 / NCTC 9757 / MK).